The sequence spans 504 residues: Amphoterin-induced protein 3 (504 aa).

A signal peptide spans 1–19 (MTWLVLLGTLLCMLRVGLG). At 20–383 (TPDSEGFPPR…PRPEPEAFNT (364 aa)) the chain is on the extracellular side. The 37-residue stretch at 25 to 61 (GFPPRALHNCPYKCICAADLLSCTGLGLQDVPAELPA) folds into the LRRNT domain. Disulfide bonds link C34/C40 and C38/C47. 6 LRR repeats span residues 62–83 (ATAD…WLAP), 86–107 (QLRA…VFVN), 110–133 (GLRL…DGLG), 134–155 (ALEK…AFHG), 158–178 (ALSH…DHLH), and 184–207 (HLLT…AALP). N107 is a glycosylation site (N-linked (GlcNAc...) asparagine). The 57-residue stretch at 219-275 (NPLPCDCRLYHLLQRWHQRGLSAVRDFAREYVCLAFKVPASRVRFFQHSRVFENCSS) folds into the LRRCT domain. 3 cysteine pairs are disulfide-bonded: C223–C251, C225–C273, and C300–C352. Residues N272, N301, N362, and N368 are each glycosylated (N-linked (GlcNAc...) asparagine). Residues 277–370 (PALGLERPEE…HNQTHEYNVS (94 aa)) form the Ig-like C2-type domain. The helical transmembrane segment at 384 to 404 (GFTTLLGCAVGLVLVLLYLFA) threads the bilayer. Residues 405–504 (PPCRCCRRAC…SIGSEGPMTT (100 aa)) lie on the Cytoplasmic side of the membrane. The segment at 422 to 448 (TPSPLQELSAQSSVLSTTPPDAPSRKA) is disordered. The span at 424–440 (SPLQELSAQSSVLSTTP) shows a compositional bias: polar residues.

It belongs to the immunoglobulin superfamily. AMIGO family. Binds AMIGO1 or AMIGO2.

Its subcellular location is the membrane. Its function is as follows. May mediate heterophilic cell-cell interaction. May contribute to signal transduction through its intracellular domain. The sequence is that of Amphoterin-induced protein 3 from Homo sapiens (Human).